Reading from the N-terminus, the 1203-residue chain is ATP-dependent helicase/nuclease subunit A (1203 aa).

In terms of domain architecture, UvrD-like helicase ATP-binding spans 4 to 472 (VKLTPEQNEA…IRLKENFRSR (469 aa)). Residue 25 to 32 (ASAGSGKT) coordinates ATP. A UvrD-like helicase C-terminal domain is found at 503–785 (VQGNITDYPV…RVMTFHKSKG (283 aa)).

Belongs to the helicase family. AddA subfamily. In terms of assembly, heterodimer of AddA and AddB/RexB. Mg(2+) is required as a cofactor.

The enzyme catalyses Couples ATP hydrolysis with the unwinding of duplex DNA by translocating in the 3'-5' direction.. It catalyses the reaction ATP + H2O = ADP + phosphate + H(+). Functionally, the heterodimer acts as both an ATP-dependent DNA helicase and an ATP-dependent, dual-direction single-stranded exonuclease. Recognizes the chi site generating a DNA molecule suitable for the initiation of homologous recombination. The AddA nuclease domain is required for chi fragment generation; this subunit has the helicase and 3' -&gt; 5' nuclease activities. The sequence is that of ATP-dependent helicase/nuclease subunit A from Lactococcus lactis subsp. lactis (strain IL1403) (Streptococcus lactis).